A 167-amino-acid chain; its full sequence is Small ribosomal subunit protein uS5 (167 aa).

The S5 DRBM domain occupies 12 to 75 (LQEKLIAVNR…EKARRNMVTV (64 aa)).

This sequence belongs to the universal ribosomal protein uS5 family. As to quaternary structure, part of the 30S ribosomal subunit. Contacts proteins S4 and S8.

In terms of biological role, with S4 and S12 plays an important role in translational accuracy. Functionally, located at the back of the 30S subunit body where it stabilizes the conformation of the head with respect to the body. The sequence is that of Small ribosomal subunit protein uS5 from Shewanella oneidensis (strain ATCC 700550 / JCM 31522 / CIP 106686 / LMG 19005 / NCIMB 14063 / MR-1).